A 212-amino-acid chain; its full sequence is Phosphatidylserine decarboxylase proenzyme (212 aa).

Catalysis depends on Ser182, which acts as the Schiff-base intermediate with substrate; via pyruvic acid. Ser182 is subject to Pyruvic acid (Ser); by autocatalysis.

This sequence belongs to the phosphatidylserine decarboxylase family. PSD-A subfamily. In terms of assembly, heterodimer of a large membrane-associated beta subunit and a small pyruvoyl-containing alpha subunit. Pyruvate is required as a cofactor. Is synthesized initially as an inactive proenzyme. Formation of the active enzyme involves a self-maturation process in which the active site pyruvoyl group is generated from an internal serine residue via an autocatalytic post-translational modification. Two non-identical subunits are generated from the proenzyme in this reaction, and the pyruvate is formed at the N-terminus of the alpha chain, which is derived from the carboxyl end of the proenzyme. The post-translation cleavage follows an unusual pathway, termed non-hydrolytic serinolysis, in which the side chain hydroxyl group of the serine supplies its oxygen atom to form the C-terminus of the beta chain, while the remainder of the serine residue undergoes an oxidative deamination to produce ammonia and the pyruvoyl prosthetic group on the alpha chain.

Its subcellular location is the cell membrane. It catalyses the reaction a 1,2-diacyl-sn-glycero-3-phospho-L-serine + H(+) = a 1,2-diacyl-sn-glycero-3-phosphoethanolamine + CO2. Its pathway is phospholipid metabolism; phosphatidylethanolamine biosynthesis; phosphatidylethanolamine from CDP-diacylglycerol: step 2/2. Its function is as follows. Catalyzes the formation of phosphatidylethanolamine (PtdEtn) from phosphatidylserine (PtdSer). The sequence is that of Phosphatidylserine decarboxylase proenzyme from Chlorobium phaeobacteroides (strain DSM 266 / SMG 266 / 2430).